The chain runs to 299 residues: Release factor glutamine methyltransferase (299 aa).

S-adenosyl-L-methionine is bound by residues Gly134–Gly138, Asp157, Trp186, and Asn203. Asn203 to Tyr206 contacts substrate.

Belongs to the protein N5-glutamine methyltransferase family. PrmC subfamily.

It catalyses the reaction L-glutaminyl-[peptide chain release factor] + S-adenosyl-L-methionine = N(5)-methyl-L-glutaminyl-[peptide chain release factor] + S-adenosyl-L-homocysteine + H(+). Methylates the class 1 translation termination release factors RF1/PrfA and RF2/PrfB on the glutamine residue of the universally conserved GGQ motif. The chain is Release factor glutamine methyltransferase from Synechocystis sp. (strain ATCC 27184 / PCC 6803 / Kazusa).